The primary structure comprises 170 residues: Acetyl-CoA decarbonylase/synthase complex subunit epsilon 2 (170 aa).

This sequence belongs to the CdhB family. In terms of assembly, heterotetramer of two alpha and two epsilon subunits. The ACDS complex is made up of alpha, epsilon, beta, gamma and delta subunits with a probable stoichiometry of (alpha(2)epsilon(2))(4)-beta(8)-(gamma(1)delta(1))(8).

It participates in one-carbon metabolism; methanogenesis from acetate. Its function is as follows. Part of a complex that catalyzes the reversible cleavage of acetyl-CoA, allowing growth on acetate as sole source of carbon and energy. The alpha-epsilon subcomponent functions as a carbon monoxide dehydrogenase. The precise role of the epsilon subunit is unclear; it may have a stabilizing role within the alpha(2)epsilon(2) component and/or be involved in electron transfer to FAD during a potential FAD-mediated CO oxidation. This Methanosarcina thermophila protein is Acetyl-CoA decarbonylase/synthase complex subunit epsilon 2 (cdhB2).